The chain runs to 558 residues: uncharacterized protein (558 aa).

A run of 6 helical transmembrane segments spans residues 63–83 (LTGI…PSIY), 90–110 (VTFG…TYWI), 143–163 (VAAV…TLYG), 168–188 (VFVT…ATNC), 226–246 (SLGS…VLLV), and 258–278 (VLIL…ILAW). The region spanning 279–330 (LTAAPVRVVRAALKRVEQGDLRGDLVVFDGTELGELQRGFNAMVNGLRERER) is the HAMP domain. The region spanning 362–486 (AVVFVDIVGS…KPVNQAARLC (125 aa)) is the Guanylate cyclase domain. The disordered stretch occupies residues 529 to 558 (TQLASPHRRPPGSIHLTAEHAEEIRTDRLG). Residues 545–558 (TAEHAEEIRTDRLG) show a composition bias toward basic and acidic residues.

This sequence belongs to the adenylyl cyclase class-3 family.

It is found in the cell membrane. This is an uncharacterized protein from Mycobacterium tuberculosis (strain CDC 1551 / Oshkosh).